Consider the following 199-residue polypeptide: Chaperone protein TorD (199 aa).

The protein belongs to the TorD/DmsD family. TorD subfamily.

Its subcellular location is the cytoplasm. Functionally, involved in the biogenesis of TorA. Acts on TorA before the insertion of the molybdenum cofactor and, as a result, probably favors a conformation of the apoenzyme that is competent for acquiring the cofactor. This chain is Chaperone protein TorD, found in Escherichia coli O45:K1 (strain S88 / ExPEC).